The primary structure comprises 99 residues: Small ribosomal subunit protein bS6c (99 aa).

It belongs to the bacterial ribosomal protein bS6 family.

Its subcellular location is the plastid. It is found in the chloroplast. Its function is as follows. Binds together with bS18 to 16S ribosomal RNA. In Cyanidioschyzon merolae (strain NIES-3377 / 10D) (Unicellular red alga), this protein is Small ribosomal subunit protein bS6c.